The chain runs to 463 residues: ATP synthase subunit beta (463 aa).

Residue 152 to 159 (GGAGVGKT) participates in ATP binding.

This sequence belongs to the ATPase alpha/beta chains family. In terms of assembly, F-type ATPases have 2 components, CF(1) - the catalytic core - and CF(0) - the membrane proton channel. CF(1) has five subunits: alpha(3), beta(3), gamma(1), delta(1), epsilon(1). CF(0) has three main subunits: a(1), b(2) and c(9-12). The alpha and beta chains form an alternating ring which encloses part of the gamma chain. CF(1) is attached to CF(0) by a central stalk formed by the gamma and epsilon chains, while a peripheral stalk is formed by the delta and b chains.

The protein resides in the cell inner membrane. It carries out the reaction ATP + H2O + 4 H(+)(in) = ADP + phosphate + 5 H(+)(out). Functionally, produces ATP from ADP in the presence of a proton gradient across the membrane. The catalytic sites are hosted primarily by the beta subunits. This Shewanella sp. (strain MR-7) protein is ATP synthase subunit beta.